The primary structure comprises 217 residues: Nascent polypeptide-associated complex subunit alpha-like protein 2 (217 aa).

The disordered stretch occupies residues 1 to 81 (MSPPPAVVTE…SEKKSRKAML (81 aa)). Acidic residues predominate over residues 37–60 (PIVEDVKDDEDDDDDDEEEEDDDA). Residues 70 to 135 (SRSEKKSRKA…AKIEDLSSQL (66 aa)) enclose the NAC-A/B domain. The UBA domain maps to 178 to 215 (VEARDIDLVMTQAGVSRSKAVKALKSHDGDIVSAIMEL).

This sequence belongs to the NAC-alpha family.

May promote appropriate targeting of ribosome-nascent polypeptide complexes. In Arabidopsis thaliana (Mouse-ear cress), this protein is Nascent polypeptide-associated complex subunit alpha-like protein 2.